Reading from the N-terminus, the 408-residue chain is Serine/threonine transporter SstT (408 aa).

9 helical membrane passes run 11 to 31 (LANG…VSLA), 43 to 63 (FLGS…VFIL), 82 to 102 (IVVL…VLSM), 141 to 161 (ALMT…GLAL), 192 to 212 (IGIF…AIAG), 216 to 236 (LLAV…PLIV), 290 to 310 (IPLG…VLTL), 316 to 336 (LGIQ…AISA), and 363 to 383 (VAMQ…AAET).

It belongs to the dicarboxylate/amino acid:cation symporter (DAACS) (TC 2.A.23) family.

It is found in the cell inner membrane. The enzyme catalyses L-serine(in) + Na(+)(in) = L-serine(out) + Na(+)(out). The catalysed reaction is L-threonine(in) + Na(+)(in) = L-threonine(out) + Na(+)(out). Its function is as follows. Involved in the import of serine and threonine into the cell, with the concomitant import of sodium (symport system). The polypeptide is Serine/threonine transporter SstT (Shewanella sp. (strain ANA-3)).